Consider the following 510-residue polypeptide: Histidine ammonia-lyase (510 aa).

Residues 143 to 145 constitute a cross-link (5-imidazolinone (Ala-Gly)); sequence ASG. The residue at position 144 (S144) is a 2,3-didehydroalanine (Ser).

It belongs to the PAL/histidase family. Contains an active site 4-methylidene-imidazol-5-one (MIO), which is formed autocatalytically by cyclization and dehydration of residues Ala-Ser-Gly.

The protein resides in the cytoplasm. The catalysed reaction is L-histidine = trans-urocanate + NH4(+). Its pathway is amino-acid degradation; L-histidine degradation into L-glutamate; N-formimidoyl-L-glutamate from L-histidine: step 1/3. In Shewanella woodyi (strain ATCC 51908 / MS32), this protein is Histidine ammonia-lyase.